The following is a 208-amino-acid chain: MARYTGPSCRLCRRENMELFLKGDRCYTDKCAIKRRNYPPGQHGQGRTKNSAYGIQLREKQKVRRIYGLMENQFRGYFAEADRMKGVTGENLLSLLERRLDNVVYRLGFASSRSESRQLVRHGHFTLNGKKVDIPSIQTRVGDVIELREKSRKIVSINDALDAVARRGIPQWLELDRDAFKGNLKALPVREDVTTPIQEQLVVELYSK.

One can recognise an S4 RNA-binding domain in the interval 98-159; the sequence is RRLDNVVYRL…KSRKIVSIND (62 aa).

This sequence belongs to the universal ribosomal protein uS4 family. In terms of assembly, part of the 30S ribosomal subunit. Contacts protein S5. The interaction surface between S4 and S5 is involved in control of translational fidelity.

One of the primary rRNA binding proteins, it binds directly to 16S rRNA where it nucleates assembly of the body of the 30S subunit. Functionally, with S5 and S12 plays an important role in translational accuracy. The protein is Small ribosomal subunit protein uS4 of Pelobacter propionicus (strain DSM 2379 / NBRC 103807 / OttBd1).